We begin with the raw amino-acid sequence, 116 residues long: Aspartate 1-decarboxylase (116 aa).

Residue S25 is the Schiff-base intermediate with substrate; via pyruvic acid of the active site. S25 is modified (pyruvic acid (Ser)). T57 lines the substrate pocket. The active-site Proton donor is Y58. Substrate is bound at residue 73–75; it reads GAA.

This sequence belongs to the PanD family. Heterooctamer of four alpha and four beta subunits. Requires pyruvate as cofactor. In terms of processing, is synthesized initially as an inactive proenzyme, which is activated by self-cleavage at a specific serine bond to produce a beta-subunit with a hydroxyl group at its C-terminus and an alpha-subunit with a pyruvoyl group at its N-terminus.

It is found in the cytoplasm. The enzyme catalyses L-aspartate + H(+) = beta-alanine + CO2. It functions in the pathway cofactor biosynthesis; (R)-pantothenate biosynthesis; beta-alanine from L-aspartate: step 1/1. Functionally, catalyzes the pyruvoyl-dependent decarboxylation of aspartate to produce beta-alanine. In Leptospira interrogans serogroup Icterohaemorrhagiae serovar copenhageni (strain Fiocruz L1-130), this protein is Aspartate 1-decarboxylase.